Reading from the N-terminus, the 459-residue chain is Zinc finger chaperone zpr1 (459 aa).

2 consecutive C4-type zinc fingers follow at residues 38-70 (CMECGKNGTTKLLLTVIPYFREVVLMSFECPHC) and 259-291 (CPSCSHQCDTHMKLLDIPHFKEVIIMSTVCDRC).

The protein belongs to the ZPR1 family.

It is found in the cytoplasm. It localises to the nucleus. Acts as a protein folding chaperone for elongation factor 1-alpha. This chain is Zinc finger chaperone zpr1, found in Schizosaccharomyces pombe (strain 972 / ATCC 24843) (Fission yeast).